A 401-amino-acid chain; its full sequence is 8-amino-7-oxononanoate synthase (401 aa).

Arg24 serves as a coordination point for substrate. Residue 111-112 (GF) coordinates pyridoxal 5'-phosphate. Substrate is bound at residue His137. Pyridoxal 5'-phosphate contacts are provided by Ser183, His211, and Thr240. Lys243 is modified (N6-(pyridoxal phosphate)lysine). Thr357 is a substrate binding site.

The protein belongs to the class-II pyridoxal-phosphate-dependent aminotransferase family. BioF subfamily. Homodimer. Pyridoxal 5'-phosphate is required as a cofactor.

The enzyme catalyses 6-carboxyhexanoyl-[ACP] + L-alanine + H(+) = (8S)-8-amino-7-oxononanoate + holo-[ACP] + CO2. It functions in the pathway cofactor biosynthesis; biotin biosynthesis. Catalyzes the decarboxylative condensation of pimeloyl-[acyl-carrier protein] and L-alanine to produce 8-amino-7-oxononanoate (AON), [acyl-carrier protein], and carbon dioxide. This Xylella fastidiosa (strain M23) protein is 8-amino-7-oxononanoate synthase.